Here is a 503-residue protein sequence, read N- to C-terminus: Probable cytosol aminopeptidase (503 aa).

The Mn(2+) site is built by Lys-270 and Asp-275. Residue Lys-282 is part of the active site. Mn(2+) contacts are provided by Asp-293, Asp-352, and Glu-354. Arg-356 is a catalytic residue.

It belongs to the peptidase M17 family. Requires Mn(2+) as cofactor.

It is found in the cytoplasm. The catalysed reaction is Release of an N-terminal amino acid, Xaa-|-Yaa-, in which Xaa is preferably Leu, but may be other amino acids including Pro although not Arg or Lys, and Yaa may be Pro. Amino acid amides and methyl esters are also readily hydrolyzed, but rates on arylamides are exceedingly low.. The enzyme catalyses Release of an N-terminal amino acid, preferentially leucine, but not glutamic or aspartic acids.. Its function is as follows. Presumably involved in the processing and regular turnover of intracellular proteins. Catalyzes the removal of unsubstituted N-terminal amino acids from various peptides. The protein is Probable cytosol aminopeptidase of Escherichia fergusonii (strain ATCC 35469 / DSM 13698 / CCUG 18766 / IAM 14443 / JCM 21226 / LMG 7866 / NBRC 102419 / NCTC 12128 / CDC 0568-73).